We begin with the raw amino-acid sequence, 226 residues long: Apoptosis regulator OPG045 (226 aa).

The tract at residues 32 to 37 (NVDHDY) is essential and sufficient to inhibit host NLRP1.

It belongs to the orthopoxvirus OPG045 family. Homodimer. Interacts with host pro-apoptotic protein BCL2L11 (via BH3 domain). Interacts with host NLRP1. Interacts with host BAK.

The protein resides in the host mitochondrion outer membrane. Its subcellular location is the host cytoplasm. Functionally, plays a role in evading host innate immune response by inhibiting host inflammasome activation. Interacts with and inhibits NLR-mediated interleukin-1 beta/IL1B production in infected cells. At the host mitochondria outer membrane, interacts with the BH3 domain of host BAK and prevents BAK from binding active BAX. In turn, host apoptosis is inhibited. The polypeptide is Apoptosis regulator OPG045 (OPG045) (Vaccinia virus (strain Western Reserve) (VACV)).